A 232-amino-acid polypeptide reads, in one-letter code: Phosphoribosylformylglycinamidine synthase subunit PurQ (232 aa).

The 231-residue stretch at 2–232 folds into the Glutamine amidotransferase type-1 domain; that stretch reads KIAIIQFGGT…SMADYITENF (231 aa). Cys86 (nucleophile) is an active-site residue. Active-site residues include His203 and Glu205.

As to quaternary structure, part of the FGAM synthase complex composed of 1 PurL, 1 PurQ and 2 PurS subunits.

Its subcellular location is the cytoplasm. It catalyses the reaction N(2)-formyl-N(1)-(5-phospho-beta-D-ribosyl)glycinamide + L-glutamine + ATP + H2O = 2-formamido-N(1)-(5-O-phospho-beta-D-ribosyl)acetamidine + L-glutamate + ADP + phosphate + H(+). The catalysed reaction is L-glutamine + H2O = L-glutamate + NH4(+). Its pathway is purine metabolism; IMP biosynthesis via de novo pathway; 5-amino-1-(5-phospho-D-ribosyl)imidazole from N(2)-formyl-N(1)-(5-phospho-D-ribosyl)glycinamide: step 1/2. Functionally, part of the phosphoribosylformylglycinamidine synthase complex involved in the purines biosynthetic pathway. Catalyzes the ATP-dependent conversion of formylglycinamide ribonucleotide (FGAR) and glutamine to yield formylglycinamidine ribonucleotide (FGAM) and glutamate. The FGAM synthase complex is composed of three subunits. PurQ produces an ammonia molecule by converting glutamine to glutamate. PurL transfers the ammonia molecule to FGAR to form FGAM in an ATP-dependent manner. PurS interacts with PurQ and PurL and is thought to assist in the transfer of the ammonia molecule from PurQ to PurL. This Methanosarcina mazei (strain ATCC BAA-159 / DSM 3647 / Goe1 / Go1 / JCM 11833 / OCM 88) (Methanosarcina frisia) protein is Phosphoribosylformylglycinamidine synthase subunit PurQ.